The primary structure comprises 938 residues: Isoleucine--tRNA ligase (938 aa).

The short motif at 61–71 (PYANGDIHLGT) is the 'HIGH' region element. E559 contributes to the L-isoleucyl-5'-AMP binding site. Residues 601-605 (KMSKS) carry the 'KMSKS' region motif. Position 604 (K604) interacts with ATP. Zn(2+) contacts are provided by C904, C907, C923, and C926.

The protein belongs to the class-I aminoacyl-tRNA synthetase family. IleS type 1 subfamily. In terms of assembly, monomer. The cofactor is Zn(2+).

It localises to the cytoplasm. The catalysed reaction is tRNA(Ile) + L-isoleucine + ATP = L-isoleucyl-tRNA(Ile) + AMP + diphosphate. In terms of biological role, catalyzes the attachment of isoleucine to tRNA(Ile). As IleRS can inadvertently accommodate and process structurally similar amino acids such as valine, to avoid such errors it has two additional distinct tRNA(Ile)-dependent editing activities. One activity is designated as 'pretransfer' editing and involves the hydrolysis of activated Val-AMP. The other activity is designated 'posttransfer' editing and involves deacylation of mischarged Val-tRNA(Ile). The sequence is that of Isoleucine--tRNA ligase from Symbiobacterium thermophilum (strain DSM 24528 / JCM 14929 / IAM 14863 / T).